A 494-amino-acid polypeptide reads, in one-letter code: GTPase Der (494 aa).

EngA-type G domains are found at residues 3–166 (PVVA…VGEK) and 208–381 (IKLA…ECAT). GTP-binding positions include 9–16 (GRPNVGKS), 56–60 (DTGGI), 118–121 (NKTD), 214–221 (GRPNVGKS), 261–265 (DTAGV), and 326–329 (NKWD). The KH-like domain occupies 382 to 466 (RRVNTSMLTK…PIRIQFKEGE (85 aa)).

It belongs to the TRAFAC class TrmE-Era-EngA-EngB-Septin-like GTPase superfamily. EngA (Der) GTPase family. Associates with the 50S ribosomal subunit.

GTPase that plays an essential role in the late steps of ribosome biogenesis. The protein is GTPase Der of Serratia proteamaculans (strain 568).